The following is a 271-amino-acid chain: Tryptophan synthase alpha chain (271 aa).

Residues glutamate 56 and aspartate 67 each act as proton acceptor in the active site.

It belongs to the TrpA family. As to quaternary structure, tetramer of two alpha and two beta chains.

The enzyme catalyses (1S,2R)-1-C-(indol-3-yl)glycerol 3-phosphate + L-serine = D-glyceraldehyde 3-phosphate + L-tryptophan + H2O. It participates in amino-acid biosynthesis; L-tryptophan biosynthesis; L-tryptophan from chorismate: step 5/5. The alpha subunit is responsible for the aldol cleavage of indoleglycerol phosphate to indole and glyceraldehyde 3-phosphate. The sequence is that of Tryptophan synthase alpha chain from Mycobacterium intracellulare.